Consider the following 173-residue polypeptide: Crossover junction endodeoxyribonuclease RuvC (173 aa).

Catalysis depends on residues aspartate 8, glutamate 67, and aspartate 139. 3 residues coordinate Mg(2+): aspartate 8, glutamate 67, and aspartate 139.

The protein belongs to the RuvC family. In terms of assembly, homodimer which binds Holliday junction (HJ) DNA. The HJ becomes 2-fold symmetrical on binding to RuvC with unstacked arms; it has a different conformation from HJ DNA in complex with RuvA. In the full resolvosome a probable DNA-RuvA(4)-RuvB(12)-RuvC(2) complex forms which resolves the HJ. Mg(2+) serves as cofactor.

It is found in the cytoplasm. The enzyme catalyses Endonucleolytic cleavage at a junction such as a reciprocal single-stranded crossover between two homologous DNA duplexes (Holliday junction).. Functionally, the RuvA-RuvB-RuvC complex processes Holliday junction (HJ) DNA during genetic recombination and DNA repair. Endonuclease that resolves HJ intermediates. Cleaves cruciform DNA by making single-stranded nicks across the HJ at symmetrical positions within the homologous arms, yielding a 5'-phosphate and a 3'-hydroxyl group; requires a central core of homology in the junction. The consensus cleavage sequence is 5'-(A/T)TT(C/G)-3'. Cleavage occurs on the 3'-side of the TT dinucleotide at the point of strand exchange. HJ branch migration catalyzed by RuvA-RuvB allows RuvC to scan DNA until it finds its consensus sequence, where it cleaves and resolves the cruciform DNA. The chain is Crossover junction endodeoxyribonuclease RuvC from Cronobacter sakazakii (strain ATCC BAA-894) (Enterobacter sakazakii).